The sequence spans 142 residues: Large ribosomal subunit protein uL11 (142 aa).

Belongs to the universal ribosomal protein uL11 family. In terms of assembly, part of the ribosomal stalk of the 50S ribosomal subunit. Interacts with L10 and the large rRNA to form the base of the stalk. L10 forms an elongated spine to which L12 dimers bind in a sequential fashion forming a multimeric L10(L12)X complex. Post-translationally, one or more lysine residues are methylated.

Its function is as follows. Forms part of the ribosomal stalk which helps the ribosome interact with GTP-bound translation factors. This is Large ribosomal subunit protein uL11 from Buchnera aphidicola subsp. Schizaphis graminum (strain Sg).